The sequence spans 378 residues: Ribosomal RNA large subunit methyltransferase G (378 aa).

It belongs to the methyltransferase superfamily. RlmG family.

It localises to the cytoplasm. It catalyses the reaction guanosine(1835) in 23S rRNA + S-adenosyl-L-methionine = N(2)-methylguanosine(1835) in 23S rRNA + S-adenosyl-L-homocysteine + H(+). Functionally, specifically methylates the guanine in position 1835 (m2G1835) of 23S rRNA. This chain is Ribosomal RNA large subunit methyltransferase G, found in Escherichia coli O9:H4 (strain HS).